Reading from the N-terminus, the 388-residue chain is Probable peptidoglycan glycosyltransferase FtsW (388 aa).

Residues 1 to 19 lie on the Cytoplasmic side of the membrane; that stretch reads MMSPSTSAPHNQPIQPELD. A helical transmembrane segment spans residues 20 to 40; sequence VLLVSTVLLLLGLGLVMVYSA. Residues 41–55 are Periplasmic-facing; the sequence is SIAIAEAKFGEGSSY. A helical membrane pass occupies residues 56–76; the sequence is YFLARQASYILAGIAVGIGCF. Over 77–89 the chain is Cytoplasmic; sequence RIPLRWWQAYSHY. Residues 90–110 traverse the membrane as a helical segment; it reads LLGLGILLLLVVLIPGISHEI. At 111–116 the chain is on the periplasmic side; that stretch reads NGSRRW. Residues 117 to 137 traverse the membrane as a helical segment; that stretch reads IPLGITSFQPSELMKLIILIF. Topologically, residues 138–151 are cytoplasmic; it reads TADYVVRKAAFKDH. The helical transmembrane segment at 152-172 threads the bilayer; it reads FFKGFLPILALLTIVSLLLLM. The Periplasmic segment spans residues 173 to 175; it reads EPD. 2 helical membrane passes run 176-196 and 197-217; these read LGAT…NGMS and LKMF…LIII. At 218–284 the chain is on the periplasmic side; it reads EPYRMDRINA…DFMFAVLAEE (67 aa). Residues 285–305 traverse the membrane as a helical segment; that stretch reads LGFAGVVTVISLFFFLLVRIF. Topologically, residues 306–324 are cytoplasmic; sequence KVGRTAARLGDQFGSLVAQ. A helical membrane pass occupies residues 325–345; it reads GIGVWLGLQAFINMGVNMGLL. Topologically, residues 346 to 351 are periplasmic; that stretch reads PTKGLT. The helical transmembrane segment at 352 to 372 threads the bilayer; sequence LPFMSYGGSSIVINSIAIAIL. The Cytoplasmic portion of the chain corresponds to 373 to 388; sequence LRIDWENRLKRRGLNA.

The protein belongs to the SEDS family. FtsW subfamily.

The protein localises to the cell inner membrane. It carries out the reaction [GlcNAc-(1-&gt;4)-Mur2Ac(oyl-L-Ala-gamma-D-Glu-L-Lys-D-Ala-D-Ala)](n)-di-trans,octa-cis-undecaprenyl diphosphate + beta-D-GlcNAc-(1-&gt;4)-Mur2Ac(oyl-L-Ala-gamma-D-Glu-L-Lys-D-Ala-D-Ala)-di-trans,octa-cis-undecaprenyl diphosphate = [GlcNAc-(1-&gt;4)-Mur2Ac(oyl-L-Ala-gamma-D-Glu-L-Lys-D-Ala-D-Ala)](n+1)-di-trans,octa-cis-undecaprenyl diphosphate + di-trans,octa-cis-undecaprenyl diphosphate + H(+). It participates in cell wall biogenesis; peptidoglycan biosynthesis. In terms of biological role, peptidoglycan polymerase that is essential for cell division. The sequence is that of Probable peptidoglycan glycosyltransferase FtsW from Nitrosomonas europaea (strain ATCC 19718 / CIP 103999 / KCTC 2705 / NBRC 14298).